The following is a 146-amino-acid chain: Leghemoglobin 2 (146 aa).

Residues 2–146 (GFTAQQDALV…LAAAIKKAMS (145 aa)) enclose the Globin domain. A Nitrated tyrosine modification is found at Y30. S45 contributes to the heme b binding site. Residue S45 is modified to Phosphoserine. O2 is bound at residue H61. Heme b contacts are provided by K64, H93, and K96. The residue at position 134 (Y134) is a Nitrated tyrosine.

This sequence belongs to the plant globin family. In terms of assembly, monomer. Nitrated in effective nodules and particularly in hypoxic conditions; this mechanism may play a protective role in the symbiosis by buffering toxic peroxynitrite NO(2)(-). Nitration level decrease during nodule senescence. In terms of processing, phosphorylation at Ser-45 disrupts the molecular environment of its porphyrin ring oxygen binding pocket, thus leading to a reduced oxygen consumption and to the delivery of oxygen O(2) to symbiosomes. In terms of tissue distribution, specifically and strongly expressed in root nodules and at low levels in seedlings.

The protein localises to the cytoplasm. It is found in the cytosol. Its subcellular location is the nucleus. Its function is as follows. Leghemoglobin that reversibly binds oxygen O(2) through a pentacoordinated heme iron. In root nodules, facilitates the diffusion of oxygen to the bacteroids while preventing the bacterial nitrogenase from being inactivated by buffering dioxygen, nitric oxide and carbon monoxide, and promoting the formation of reactive oxygen species (ROS, e.g. H(2)O(2)). This role is essential for symbiotic nitrogen fixation (SNF). The protein is Leghemoglobin 2 of Lotus japonicus (Lotus corniculatus var. japonicus).